A 108-amino-acid chain; its full sequence is Large ribosomal subunit protein uL24 (108 aa).

The protein belongs to the universal ribosomal protein uL24 family. Part of the 50S ribosomal subunit.

In terms of biological role, one of two assembly initiator proteins, it binds directly to the 5'-end of the 23S rRNA, where it nucleates assembly of the 50S subunit. Functionally, one of the proteins that surrounds the polypeptide exit tunnel on the outside of the subunit. This Salinispora tropica (strain ATCC BAA-916 / DSM 44818 / JCM 13857 / NBRC 105044 / CNB-440) protein is Large ribosomal subunit protein uL24.